A 347-amino-acid chain; its full sequence is Heat-inducible transcription repressor HrcA (347 aa).

This sequence belongs to the HrcA family.

Negative regulator of class I heat shock genes (grpE-dnaK-dnaJ and groELS operons). Prevents heat-shock induction of these operons. This Lactococcus lactis subsp. cremoris (strain MG1363) protein is Heat-inducible transcription repressor HrcA.